The following is a 150-amino-acid chain: Large ribosomal subunit protein bL9 (150 aa).

This sequence belongs to the bacterial ribosomal protein bL9 family.

Binds to the 23S rRNA. The protein is Large ribosomal subunit protein bL9 of Polaromonas sp. (strain JS666 / ATCC BAA-500).